The primary structure comprises 547 residues: Inositol 1,4,5-trisphosphate receptor-interacting protein-like 1 (547 aa).

The first 16 residues, 1 to 16 (MAVISLLFLAVMYVVH), serve as a signal peptide directing secretion. Over 17 to 96 (HPLMVSDRMD…PFQASGQDGG (80 aa)) the chain is Extracellular. A coiled-coil region spans residues 28-66 (DTLARSRQLEKRMSEEMRQLEIEFEERSRAAEEKQKAEN). Residues 97–117 (PLGWMLGNLWNAGLFCLFLIF) traverse the membrane as a helical segment. Topologically, residues 118–547 (ELLRQNMQHE…LPCSPLAGGL (430 aa)) are cytoplasmic.

This sequence belongs to the ITPRIP family.

It localises to the cell membrane. In terms of biological role, functions as a ligand of CD3E, inhibiting TCR-CD3 complex signaling to regulate T cell activation. Induces stable CD3E-NCK1 binding, thereby preventing the CD3E-ZAP70 interaction and subsequently inhibiting the activation of the downstream ERK-NFkB signaling cascade and calcium influx. The chain is Inositol 1,4,5-trisphosphate receptor-interacting protein-like 1 (Itpripl1) from Rattus norvegicus (Rat).